A 324-amino-acid polypeptide reads, in one-letter code: Antihemorrhagic factor jMSF (324 aa).

Positions 1–19 (MHFLVALVLLGQIIGSTLS) are cleaved as a signal peptide. Cystatin fetuin-A-type domains follow at residues 22-130 (VRGD…VKCH) and 141-254 (RNCP…SDCV). Residues 23-25 (RGD) carry the Cell attachment site motif. Disulfide bonds link Cys28/Cys315, Cys85/Cys96, Cys110/Cys129, Cys143/Cys146, Cys205/Cys217, Cys230/Cys253, and Cys287/Cys291. The N-linked (GlcNAc...) asparagine glycan is linked to Asn204. Asn282 carries an N-linked (GlcNAc...) asparagine glycan.

As to quaternary structure, homodimer. In terms of tissue distribution, expressed by the liver.

Its subcellular location is the secreted. Its function is as follows. Suppress hemorrhage induced by metalloproteinases from the same venom (brevilysin-H3, -H4, -H6) and from habu venom (weak inhibition of the metalloproteinases HR2A). The non-hemorrhagic brevilysin-H2 is strongly inhibited by jMSF, whereas the brevilysin-L6 is not inhibited. Does not inhibit serine and cysteine proteases such as trypsin, chymotrypsin, thermolysin, and papain. The inhibition may occur by formation of a non-covalent complex between this protein and the proteinases at their metalloproteinase domains. This chain is Antihemorrhagic factor jMSF, found in Gloydius blomhoffii (Mamushi).